We begin with the raw amino-acid sequence, 70 residues long: MRAIISLFLISAMVFSMIQAVPEEXGLQLSEDERGGCLPHNRFCNALSGPRCCSGLKCKELSIWDSTCLG.

Residues 1–20 form the signal peptide; the sequence is MRAIISLFLISAMVFSMIQA. A propeptide spanning residues 21–34 is cleaved from the precursor; sequence VPEEXGLQLSEDER. 3 disulfides stabilise this stretch: C37-C53, C44-C58, and C52-C68. Residue L69 is modified to Leucine amide.

The protein belongs to the neurotoxin 01 (U2-agtx) family. In terms of tissue distribution, expressed by the venom gland.

It is found in the secreted. In terms of biological role, insect active toxin causing rapid but reversible paralysis in crickets. No activity shown in mammals. Does not show effect on mammalian voltage-gated calcium channels. The chain is U2-agatoxin-Ao1m from Agelena orientalis (Funnel-web spider).